The following is a 293-amino-acid chain: Glycine--tRNA ligase alpha subunit (293 aa).

This sequence belongs to the class-II aminoacyl-tRNA synthetase family. Tetramer of two alpha and two beta subunits.

The protein resides in the cytoplasm. It carries out the reaction tRNA(Gly) + glycine + ATP = glycyl-tRNA(Gly) + AMP + diphosphate. This Sulfurimonas denitrificans (strain ATCC 33889 / DSM 1251) (Thiomicrospira denitrificans (strain ATCC 33889 / DSM 1251)) protein is Glycine--tRNA ligase alpha subunit.